We begin with the raw amino-acid sequence, 210 residues long: Putative transmembrane protein DDB_G0267530 (210 aa).

The tract at residues 1 to 40 is disordered; it reads MGVEDQPQTQPQTQPQQQPQMGYQPQMGYQPQAQMGYQPQ. 2 helical membrane passes run 119 to 139 and 148 to 168; these read VIVF…FFFI and TFGI…VIVV.

It localises to the membrane. This chain is Putative transmembrane protein DDB_G0267530, found in Dictyostelium discoideum (Social amoeba).